We begin with the raw amino-acid sequence, 371 residues long: Opine oxidase subunit B (371 aa).

In terms of assembly, heterodimer of a subunit A and a subunit B.

It participates in opine metabolism; octopine degradation. Its function is as follows. Oxidative cleavage of octopine into L-arginine and pyruvate. The protein is Opine oxidase subunit B (ooxB) of Agrobacterium tumefaciens (strain Ach5).